Here is a 214-residue protein sequence, read N- to C-terminus: ATP phosphoribosyltransferase (214 aa).

This sequence belongs to the ATP phosphoribosyltransferase family. Short subfamily. As to quaternary structure, heteromultimer composed of HisG and HisZ subunits.

It localises to the cytoplasm. The catalysed reaction is 1-(5-phospho-beta-D-ribosyl)-ATP + diphosphate = 5-phospho-alpha-D-ribose 1-diphosphate + ATP. Its pathway is amino-acid biosynthesis; L-histidine biosynthesis; L-histidine from 5-phospho-alpha-D-ribose 1-diphosphate: step 1/9. Its function is as follows. Catalyzes the condensation of ATP and 5-phosphoribose 1-diphosphate to form N'-(5'-phosphoribosyl)-ATP (PR-ATP). Has a crucial role in the pathway because the rate of histidine biosynthesis seems to be controlled primarily by regulation of HisG enzymatic activity. The polypeptide is ATP phosphoribosyltransferase (Halorhodospira halophila (strain DSM 244 / SL1) (Ectothiorhodospira halophila (strain DSM 244 / SL1))).